Consider the following 395-residue polypeptide: S-adenosylmethionine synthase (395 aa).

H16 is a binding site for ATP. A Mg(2+)-binding site is contributed by D18. Position 44 (E44) interacts with K(+). L-methionine-binding residues include E57 and Q100. The flexible loop stretch occupies residues 100 to 110 (QSPDIAQGVDD). ATP is bound by residues 174–176 (DAK), 241–242 (RF), D250, 256–257 (RK), A273, and K277. D250 provides a ligand contact to L-methionine. An L-methionine-binding site is contributed by K281.

This sequence belongs to the AdoMet synthase family. Homotetramer; dimer of dimers. The cofactor is Mg(2+). Requires K(+) as cofactor.

The protein resides in the cytoplasm. It catalyses the reaction L-methionine + ATP + H2O = S-adenosyl-L-methionine + phosphate + diphosphate. It functions in the pathway amino-acid biosynthesis; S-adenosyl-L-methionine biosynthesis; S-adenosyl-L-methionine from L-methionine: step 1/1. In terms of biological role, catalyzes the formation of S-adenosylmethionine (AdoMet) from methionine and ATP. The overall synthetic reaction is composed of two sequential steps, AdoMet formation and the subsequent tripolyphosphate hydrolysis which occurs prior to release of AdoMet from the enzyme. In Limosilactobacillus reuteri (strain DSM 20016) (Lactobacillus reuteri), this protein is S-adenosylmethionine synthase.